Here is a 556-residue protein sequence, read N- to C-terminus: Guanine nucleotide-binding protein-like 3 homolog (556 aa).

The segment at 29–50 (NRKVKKEAKKNGTTNKKEKTIS) is disordered. Residues 58–95 (KEEILVQAEQEREKIKVRQEAAKEAAKIHRIEKRKNNL) adopt a coiled-coil conformation. One can recognise a CP-type G domain in the interval 138-317 (ASEVRKTVEI…LIDSPGVILV (180 aa)). GTP-binding positions include 184-187 (NKID), 266-273 (GFPNVGKS), and 310-313 (DSPG). Disordered stretches follow at residues 461–508 (APHN…PESL) and 525–556 (KKQK…AMEM). The span at 466–478 (DEEEDDDDEMETD) shows a compositional bias: acidic residues. Over residues 525–535 (KKQKKKSKKTA) the composition is skewed to basic residues.

This sequence belongs to the TRAFAC class YlqF/YawG GTPase family.

It localises to the nucleus. Functionally, may play a role in regulating cellular proliferation in both germline and somatic tissues. This is Guanine nucleotide-binding protein-like 3 homolog from Caenorhabditis elegans.